A 1905-amino-acid polypeptide reads, in one-letter code: Tudor domain-containing 6-like (1905 aa).

Tudor domains are found at residues 1–30 (MVEV…LREM), 215–279 (YERG…LFDL), and 435–491 (SVTP…AYEL). Residues 564–795 (SRAEGSFGNS…SKLTPPLSKL (232 aa)) form a disordered region. The segment covering 573-591 (SEKRNQLNDLDRGGRKETT) has biased composition (basic and acidic residues). Positions 592–602 (SKFQPYSQGSK) are enriched in polar residues. Residues 622–631 (FQTKEREQFE) are compositionally biased toward basic and acidic residues. Polar residues-rich tracts occupy residues 651 to 660 (VQKNMSQSGF) and 687 to 704 (LYSQ…SSYS). The span at 715–726 (RSKERQVSEHKQ) shows a compositional bias: basic and acidic residues. Composition is skewed to polar residues over residues 746–766 (KASQ…GSDQ) and 774–787 (NASQ…QESK). Tudor domains are found at residues 853–910 (YVNL…LLSI) and 1060–1118 (EIEV…IAAI). Disordered regions lie at residues 1213–1245 (IEDN…TPAV), 1449–1599 (EDFE…TETE), 1655–1682 (VEDL…SGPV), and 1827–1905 (ESPA…APSV). 2 stretches are compositionally biased toward acidic residues: residues 1491–1500 (EAEGLEDQDQ) and 1522–1535 (EQAE…DPGT). Basic and acidic residues predominate over residues 1553–1588 (SQEHKDFPEQEEDRVAEHKNDISEPDLQSKEQKEDL). The span at 1663 to 1673 (QESQICISGSD) shows a compositional bias: polar residues. A compositionally biased stretch (acidic residues) spans 1876–1887 (FEPETDDMEQME).

In terms of assembly, interacts with FRGY2 (a component of messenger ribonucleoprotein (mRNP) particle) during germ cell development. Expressed in testis.

It localises to the cytoplasm. In terms of biological role, tudor domain-containing protein involved in germ cell development, more specifically the formation of chromatoid body (during spermiogenesis), Balbiani body (during oogenesis), germ plasm (upon fertilization), and for proper miRNA expression and spliceosome maturation. Component of cytoplasmic mRNP particle through interaction with FRGY2, and binds to maternal mRNA related to cell cycle (RCC1, RHAMM, INCENP-A, MAD2L1, HELLS) and a germ plasm specific mRNA (Dead end/Dnd1), it is proposed a role in translational activation of the maternal mRNAs repressed in mRNP particle. The polypeptide is Tudor domain-containing 6-like (Xenopus laevis (African clawed frog)).